The sequence spans 101 residues: NAD(P)H-quinone oxidoreductase subunit 4L, chloroplastic (101 aa).

3 helical membrane passes run 2 to 22 (MTEH…YGLI), 32 to 52 (MCLE…SDLF), and 61 to 81 (IFSI…PAIV).

This sequence belongs to the complex I subunit 4L family. NDH is composed of at least 16 different subunits, 5 of which are encoded in the nucleus.

The protein resides in the plastid. It localises to the chloroplast thylakoid membrane. It carries out the reaction a plastoquinone + NADH + (n+1) H(+)(in) = a plastoquinol + NAD(+) + n H(+)(out). The enzyme catalyses a plastoquinone + NADPH + (n+1) H(+)(in) = a plastoquinol + NADP(+) + n H(+)(out). NDH shuttles electrons from NAD(P)H:plastoquinone, via FMN and iron-sulfur (Fe-S) centers, to quinones in the photosynthetic chain and possibly in a chloroplast respiratory chain. The immediate electron acceptor for the enzyme in this species is believed to be plastoquinone. Couples the redox reaction to proton translocation, and thus conserves the redox energy in a proton gradient. The sequence is that of NAD(P)H-quinone oxidoreductase subunit 4L, chloroplastic from Liriodendron tulipifera (Tuliptree).